The chain runs to 427 residues: 3-phosphoshikimate 1-carboxyvinyltransferase (427 aa).

The 3-phosphoshikimate site is built by lysine 22, serine 23, and arginine 27. Lysine 22 is a binding site for phosphoenolpyruvate. 2 residues coordinate phosphoenolpyruvate: glycine 96 and arginine 124. 3-phosphoshikimate is bound by residues serine 169, serine 170, glutamine 171, serine 197, aspartate 313, asparagine 336, and lysine 340. Position 171 (glutamine 171) interacts with phosphoenolpyruvate. Residue aspartate 313 is the Proton acceptor of the active site. The phosphoenolpyruvate site is built by arginine 344, arginine 386, and lysine 411.

The protein belongs to the EPSP synthase family. Monomer.

It is found in the cytoplasm. The catalysed reaction is 3-phosphoshikimate + phosphoenolpyruvate = 5-O-(1-carboxyvinyl)-3-phosphoshikimate + phosphate. The protein operates within metabolic intermediate biosynthesis; chorismate biosynthesis; chorismate from D-erythrose 4-phosphate and phosphoenolpyruvate: step 6/7. Its function is as follows. Catalyzes the transfer of the enolpyruvyl moiety of phosphoenolpyruvate (PEP) to the 5-hydroxyl of shikimate-3-phosphate (S3P) to produce enolpyruvyl shikimate-3-phosphate and inorganic phosphate. The polypeptide is 3-phosphoshikimate 1-carboxyvinyltransferase (Escherichia coli O127:H6 (strain E2348/69 / EPEC)).